A 255-amino-acid chain; its full sequence is ETS-related transcription factor Elf-5 (255 aa).

In terms of domain architecture, PNT spans 33-119 (YPAFEHQTAC…FILQSIRSQG (87 aa)). A DNA-binding region (ETS) is located at residues 163 to 244 (SHLWEFVRDL…VDRRLVYKFG (82 aa)).

It belongs to the ETS family.

It localises to the nucleus. In terms of biological role, transcriptionally activator that may play a role in regulating the later stages of keratinocytes terminal differentiation. Binds to DNA sequences containing the consensus nucleotide core sequence GGA[AT]. The chain is ETS-related transcription factor Elf-5 (ELF5) from Bos taurus (Bovine).